The chain runs to 287 residues: Large ribosomal subunit protein uL2 (287 aa).

Positions 221–287 (RGSVMNPCDH…SKRSRGGRDS (67 aa)) are disordered. Over residues 258-287 (KTRKRNKPSNRFVLRKRRRTSKRSRGGRDS) the composition is skewed to basic residues.

This sequence belongs to the universal ribosomal protein uL2 family. In terms of assembly, part of the 50S ribosomal subunit. Forms a bridge to the 30S subunit in the 70S ribosome.

Functionally, one of the primary rRNA binding proteins. Required for association of the 30S and 50S subunits to form the 70S ribosome, for tRNA binding and peptide bond formation. It has been suggested to have peptidyltransferase activity; this is somewhat controversial. Makes several contacts with the 16S rRNA in the 70S ribosome. In Prochlorococcus marinus (strain MIT 9303), this protein is Large ribosomal subunit protein uL2.